A 93-amino-acid polypeptide reads, in one-letter code: Pancreatic polypeptide prohormone (93 aa).

The N-terminal stretch at 1–29 (MPAACRCLFLLLLSACVALLLQPPLGTRG) is a signal peptide. The residue at position 65 (Tyr-65) is a Tyrosine amide. A propeptide spanning residues 89 to 93 (ELMDE) is cleaved from the precursor.

This sequence belongs to the NPY family.

Its subcellular location is the secreted. Its function is as follows. Hormone secreted by pancreatic cells that acts as a regulator of pancreatic and gastrointestinal functions probably by signaling through the G protein-coupled receptor NPY4R2. This chain is Pancreatic polypeptide prohormone (PPY), found in Canis lupus familiaris (Dog).